Here is a 332-residue protein sequence, read N- to C-terminus: Autoinducer 2 import system permease protein LsrD (332 aa).

Transmembrane regions (helical) follow at residues 7–27 (YSWEIALAALLIFEILAFGLI), 45–65 (ICIGIVALPLTMVIVSGGMDI), 70–90 (TIGLCAITLGVLFQLGMPLPL), 91–111 (AIIITLLLGAICGLINAGLII), 118–138 (LVITLGTMYLFGGSALLLSGM), 162–182 (FLGIPMPLIFFLVCCLFFWLL), 216–236 (VYAMTGCASAIAAVLLVSYFG), 240–260 (SDLGASFLMPTITAVVLGGAN), 261–281 (IYGGSGSIMGSALAALLVGFL), and 288–308 (AGVPNQISSALSGALLIVVVV).

Belongs to the binding-protein-dependent transport system permease family. AraH/RbsC subfamily. The complex is composed of two ATP-binding proteins (LsrA), two transmembrane proteins (LsrC and LsrD) and a solute-binding protein (LsrB).

The protein localises to the cell inner membrane. In terms of biological role, part of the ABC transporter complex LsrABCD involved in autoinducer 2 (AI-2) import. Probably responsible for the translocation of the substrate across the membrane. The polypeptide is Autoinducer 2 import system permease protein LsrD (lsrD) (Salmonella typhi).